Consider the following 153-residue polypeptide: 6,7-dimethyl-8-ribityllumazine synthase (153 aa).

5-amino-6-(D-ribitylamino)uracil-binding positions include phenylalanine 22, 56 to 58 (AFE), and 80 to 82 (TVI). 85–86 (ST) serves as a coordination point for (2S)-2-hydroxy-3-oxobutyl phosphate. Histidine 88 (proton donor) is an active-site residue. Phenylalanine 113 provides a ligand contact to 5-amino-6-(D-ribitylamino)uracil. Position 127 (arginine 127) interacts with (2S)-2-hydroxy-3-oxobutyl phosphate.

This sequence belongs to the DMRL synthase family. In terms of assembly, forms an icosahedral capsid composed of 60 subunits, arranged as a dodecamer of pentamers.

The enzyme catalyses (2S)-2-hydroxy-3-oxobutyl phosphate + 5-amino-6-(D-ribitylamino)uracil = 6,7-dimethyl-8-(1-D-ribityl)lumazine + phosphate + 2 H2O + H(+). Its pathway is cofactor biosynthesis; riboflavin biosynthesis; riboflavin from 2-hydroxy-3-oxobutyl phosphate and 5-amino-6-(D-ribitylamino)uracil: step 1/2. Functionally, catalyzes the formation of 6,7-dimethyl-8-ribityllumazine by condensation of 5-amino-6-(D-ribitylamino)uracil with 3,4-dihydroxy-2-butanone 4-phosphate. This is the penultimate step in the biosynthesis of riboflavin. The sequence is that of 6,7-dimethyl-8-ribityllumazine synthase from Actinobacillus pleuropneumoniae serotype 7 (strain AP76).